Consider the following 200-residue polypeptide: MSLIRELLRAIRITLIFWLITAIIYPLAILVVGQGLFPYQANGSIMQNIEAQPIGSALIGQVFASEQYFHSRPSASRYSQGRRARPTGISGGSNLAPSNPALLNRIIEEANQLREENIQPIEDLIYSSGSGLDPHISIQAASQQIERVARARNVQPDEILRLMNKYTDGRFLWIFGEPGVNVLRLNYALDLQDFNNQQNR.

The helical transmembrane segment at 13-33 (ITLIFWLITAIIYPLAILVVG) threads the bilayer.

This sequence belongs to the KdpC family. As to quaternary structure, the system is composed of three essential subunits: KdpA, KdpB and KdpC.

It localises to the cell membrane. In terms of biological role, part of the high-affinity ATP-driven potassium transport (or Kdp) system, which catalyzes the hydrolysis of ATP coupled with the electrogenic transport of potassium into the cytoplasm. This subunit acts as a catalytic chaperone that increases the ATP-binding affinity of the ATP-hydrolyzing subunit KdpB by the formation of a transient KdpB/KdpC/ATP ternary complex. The protein is Potassium-transporting ATPase KdpC subunit of Anabaena sp. (strain L31).